A 383-amino-acid polypeptide reads, in one-letter code: Mannitol-1-phosphate 5-dehydrogenase (383 aa).

An NAD(+)-binding site is contributed by 3–14; it reads ALHFGAGNIGRG.

Belongs to the mannitol dehydrogenase family.

It carries out the reaction D-mannitol 1-phosphate + NAD(+) = beta-D-fructose 6-phosphate + NADH + H(+). This is Mannitol-1-phosphate 5-dehydrogenase from Serratia proteamaculans (strain 568).